The chain runs to 488 residues: Microtubule-destabilizing protein 60 (488 aa).

Over residues 25–56 the composition is skewed to polar residues; it reads AQEVSRFSENSNPNFVSHSTPLEKSSKSSAQK. Disordered stretches follow at residues 25 to 71, 262 to 304, and 436 to 457; these read AQEV…VFSP, HASV…TKKQ, and DRPF…PKFN. Low complexity predominate over residues 264–280; the sequence is SVSSSWDNSVSSLNSNG.

It belongs to the TPX2 family.

The protein resides in the cytoplasm. The protein localises to the cytoskeleton. Its function is as follows. Binds directly to microtubules. Microtubule-destabilizing protein involved in the PIF3-dependent positive regulation of hypocotyl cell elongation via the modulation of cortical microtubules dynamic in response to light and ethylene signaling. Promotes submergence-induced and ethylene-dependent underwater hypocotyl elongation. The protein is Microtubule-destabilizing protein 60 of Arabidopsis thaliana (Mouse-ear cress).